The chain runs to 375 residues: MAKRDFYEVLGVERGASEGDLKKAYRRLAMKYHPDRNPGDKESEDKFKEANEAYEVLSDTSKRAAYDQYGHAGVDPSMGGGGAGFGGANFSDIFGDVFSDFFGGGRGGSRSGGAQRGSDLRYTLELNLEEAVRGTTVSIRVPTLVNCKPCDGSGAKKGSTPSTCPTCGGIGQVRMQQGFFAVQQTCPRCHGQGKIITDPCNSCHGEGRVEEYKTLSVKVPAGVDTGDRIRLSGEGEAGTHGGPTGDLYVVINVREHDIFQRDGKHLYCEVPISYTDAALGGELEVPTLDGRVKLKIPEGTQTGKQFRLRGKGVAPVRGGAAGDLLCRVAVETPVNLSRRQRELLEELRDSLEGDSSHSPKASGWFEGVKRFFGDL.

The region spanning 5-70 (DFYEVLGVER…SKRAAYDQYG (66 aa)) is the J domain. The CR-type zinc finger occupies 134-212 (GTTVSIRVPT…CHGEGRVEEY (79 aa)). Residues Cys147, Cys150, Cys164, Cys167, Cys186, Cys189, Cys200, and Cys203 each contribute to the Zn(2+) site. CXXCXGXG motif repeat units follow at residues 147 to 154 (CKPCDGSG), 164 to 171 (CPTCGGIG), 186 to 193 (CPRCHGQG), and 200 to 207 (CNSCHGEG).

This sequence belongs to the DnaJ family. Homodimer. Requires Zn(2+) as cofactor.

The protein resides in the cytoplasm. Functionally, participates actively in the response to hyperosmotic and heat shock by preventing the aggregation of stress-denatured proteins and by disaggregating proteins, also in an autonomous, DnaK-independent fashion. Unfolded proteins bind initially to DnaJ; upon interaction with the DnaJ-bound protein, DnaK hydrolyzes its bound ATP, resulting in the formation of a stable complex. GrpE releases ADP from DnaK; ATP binding to DnaK triggers the release of the substrate protein, thus completing the reaction cycle. Several rounds of ATP-dependent interactions between DnaJ, DnaK and GrpE are required for fully efficient folding. Also involved, together with DnaK and GrpE, in the DNA replication of plasmids through activation of initiation proteins. This chain is Chaperone protein DnaJ, found in Pseudomonas entomophila (strain L48).